The primary structure comprises 139 residues: Large-conductance mechanosensitive channel (139 aa).

The next 3 helical transmembrane spans lie at 14–34 (VVDL…VNSA), 38–58 (IFMP…YYIP), and 82–102 (GQFL…FLVI).

It belongs to the MscL family. In terms of assembly, homopentamer.

The protein resides in the cell inner membrane. In terms of biological role, channel that opens in response to stretch forces in the membrane lipid bilayer. May participate in the regulation of osmotic pressure changes within the cell. This chain is Large-conductance mechanosensitive channel, found in Methylobacterium radiotolerans (strain ATCC 27329 / DSM 1819 / JCM 2831 / NBRC 15690 / NCIMB 10815 / 0-1).